The primary structure comprises 61 residues: Small ribosomal subunit protein uS14 (61 aa).

Zn(2+) contacts are provided by Cys-24, Cys-27, Cys-40, and Cys-43.

This sequence belongs to the universal ribosomal protein uS14 family. Zinc-binding uS14 subfamily. In terms of assembly, part of the 30S ribosomal subunit. Contacts proteins S3 and S10. Zn(2+) serves as cofactor.

Binds 16S rRNA, required for the assembly of 30S particles and may also be responsible for determining the conformation of the 16S rRNA at the A site. This chain is Small ribosomal subunit protein uS14, found in Pseudothermotoga lettingae (strain ATCC BAA-301 / DSM 14385 / NBRC 107922 / TMO) (Thermotoga lettingae).